Reading from the N-terminus, the 362-residue chain is 3-dehydroquinate synthase (362 aa).

Residues 70 to 75, 104 to 108, 128 to 129, K141, and K150 each bind NAD(+); these read DGESYK, GVVGD, and TT. Positions 183, 246, and 263 each coordinate Zn(2+).

It belongs to the sugar phosphate cyclases superfamily. Dehydroquinate synthase family. Co(2+) is required as a cofactor. Requires Zn(2+) as cofactor. NAD(+) serves as cofactor.

The protein localises to the cytoplasm. It carries out the reaction 7-phospho-2-dehydro-3-deoxy-D-arabino-heptonate = 3-dehydroquinate + phosphate. Its pathway is metabolic intermediate biosynthesis; chorismate biosynthesis; chorismate from D-erythrose 4-phosphate and phosphoenolpyruvate: step 2/7. In terms of biological role, catalyzes the conversion of 3-deoxy-D-arabino-heptulosonate 7-phosphate (DAHP) to dehydroquinate (DHQ). The protein is 3-dehydroquinate synthase of Saccharophagus degradans (strain 2-40 / ATCC 43961 / DSM 17024).